The chain runs to 289 residues: Shikimate dehydrogenase (NADP(+)) (289 aa).

Residues 22–24 (SRS) and threonine 69 contribute to the shikimate site. Catalysis depends on lysine 73, which acts as the Proton acceptor. Glutamate 85 lines the NADP(+) pocket. Shikimate is bound by residues asparagine 94 and aspartate 109. Residues 134 to 138 (GAGGA), 158 to 163 (NRTLSR), and isoleucine 226 each bind NADP(+). Residue tyrosine 228 participates in shikimate binding. Glycine 249 is an NADP(+) binding site.

It belongs to the shikimate dehydrogenase family. As to quaternary structure, homodimer.

The enzyme catalyses shikimate + NADP(+) = 3-dehydroshikimate + NADPH + H(+). Its pathway is metabolic intermediate biosynthesis; chorismate biosynthesis; chorismate from D-erythrose 4-phosphate and phosphoenolpyruvate: step 4/7. Functionally, involved in the biosynthesis of the chorismate, which leads to the biosynthesis of aromatic amino acids. Catalyzes the reversible NADPH linked reduction of 3-dehydroshikimate (DHSA) to yield shikimate (SA). In Brucella melitensis biotype 2 (strain ATCC 23457), this protein is Shikimate dehydrogenase (NADP(+)).